A 132-amino-acid chain; its full sequence is Large ribosomal subunit protein uL22 (132 aa).

It belongs to the universal ribosomal protein uL22 family. In terms of assembly, part of the 50S ribosomal subunit.

Functionally, this protein binds specifically to 23S rRNA; its binding is stimulated by other ribosomal proteins, e.g. L4, L17, and L20. It is important during the early stages of 50S assembly. It makes multiple contacts with different domains of the 23S rRNA in the assembled 50S subunit and ribosome. The globular domain of the protein is located near the polypeptide exit tunnel on the outside of the subunit, while an extended beta-hairpin is found that lines the wall of the exit tunnel in the center of the 70S ribosome. This Rhodospirillum centenum (strain ATCC 51521 / SW) protein is Large ribosomal subunit protein uL22.